The sequence spans 337 residues: Glycerol-3-phosphate dehydrogenase [NAD(P)+] (337 aa).

Residues W12 and K107 each contribute to the NADPH site. Positions 107, 138, and 140 each coordinate sn-glycerol 3-phosphate. Residue A142 participates in NADPH binding. Sn-glycerol 3-phosphate-binding residues include K193, D246, S256, R257, and N258. K193 acts as the Proton acceptor in catalysis. R257 lines the NADPH pocket. 2 residues coordinate NADPH: V282 and E284.

This sequence belongs to the NAD-dependent glycerol-3-phosphate dehydrogenase family.

It is found in the cytoplasm. It catalyses the reaction sn-glycerol 3-phosphate + NAD(+) = dihydroxyacetone phosphate + NADH + H(+). The catalysed reaction is sn-glycerol 3-phosphate + NADP(+) = dihydroxyacetone phosphate + NADPH + H(+). It functions in the pathway membrane lipid metabolism; glycerophospholipid metabolism. Functionally, catalyzes the reduction of the glycolytic intermediate dihydroxyacetone phosphate (DHAP) to sn-glycerol 3-phosphate (G3P), the key precursor for phospholipid synthesis. The protein is Glycerol-3-phosphate dehydrogenase [NAD(P)+] of Koribacter versatilis (strain Ellin345).